Reading from the N-terminus, the 430-residue chain is MKRLDTSAAGFSEDFATLLAARGSDERSVAEPVRAILADVRSRGDEALCDYTARFDRLTLPAEKLRISAEEIASEAARVPADLMDALRTAARRIETFHAAQMPKDLDFTDEDGIRLGMRWTPLDAVGLYVPGGKAAYPSSVLMNALPARVAGVKRLAMCVPSPDGVLNPLVLAAAQLCGVEEIYRIGGAQAVGAMAFGTDLIAPVDRIVGPGNAYVAEAKRQVFGHVGIDSIAGPSEVVVVADGQNDPRLVALDLLAQAEHDEQAQAILITTDAAFAERAAEAVRKELETLPRTAIASKSWEDHGAIIVVRSLEEAAEIVNALAPEHLEVMLDAPRDFSAMIRHAGAIFMGRYCPEAVGDYVGGPNHVLPTSRTARFASGLSVFDFIKRTTTIEADEAGLRRIGPAGVALAKAEGLDAHALSLSVRLEKN.

Residues Y129, Q190, and N213 each coordinate NAD(+). Substrate contacts are provided by S236, Q258, and H261. Zn(2+) is bound by residues Q258 and H261. Catalysis depends on proton acceptor residues E326 and H327. The substrate site is built by H327, D360, E414, and H419. A Zn(2+)-binding site is contributed by D360. H419 contributes to the Zn(2+) binding site.

The protein belongs to the histidinol dehydrogenase family. Zn(2+) serves as cofactor.

The catalysed reaction is L-histidinol + 2 NAD(+) + H2O = L-histidine + 2 NADH + 3 H(+). The protein operates within amino-acid biosynthesis; L-histidine biosynthesis; L-histidine from 5-phospho-alpha-D-ribose 1-diphosphate: step 9/9. Its function is as follows. Catalyzes the sequential NAD-dependent oxidations of L-histidinol to L-histidinaldehyde and then to L-histidine. In Gluconobacter oxydans (strain 621H) (Gluconobacter suboxydans), this protein is Histidinol dehydrogenase.